A 163-amino-acid chain; its full sequence is HTH-type transcriptional regulator IscR (163 aa).

The 130-residue stretch at 2 to 131 (RLTSKGRYAV…NNITLGELVN (130 aa)) folds into the HTH rrf2-type domain. The segment at residues 28–51 (LADISERQGISLSYLEQLFSRLRK) is a DNA-binding region (H-T-H motif). [2Fe-2S] cluster contacts are provided by cysteine 92, cysteine 98, and cysteine 104.

Requires [2Fe-2S] cluster as cofactor.

Its function is as follows. Regulates the transcription of several operons and genes involved in the biogenesis of Fe-S clusters and Fe-S-containing proteins. This Klebsiella pneumoniae subsp. pneumoniae (strain ATCC 700721 / MGH 78578) protein is HTH-type transcriptional regulator IscR.